A 326-amino-acid chain; its full sequence is Nucleotide sugar transporter SLC35D2 (326 aa).

At 1 to 15 (MEEPNAAPLPSRLAR) the chain is on the extracellular side. The helical transmembrane segment at 16–36 (LLSALFYGTCSFLIVLVNKAL) threads the bilayer. Topologically, residues 37-41 (LTTYG) are cytoplasmic. Residues 42 to 62 (FPSPIVLGIGQMATTIMILYV) traverse the membrane as a helical segment. Topologically, residues 63-130 (FKLNKIIHFP…LLEAIILGTQ (68 aa)) are extracellular. A helical transmembrane segment spans residues 131–151 (YSLNIILSVLAIVLGAFIAAG). Residues 152–155 (SDLT) lie on the Cytoplasmic side of the membrane. Residues 156–176 (FNLEGYVFVFLNDIFTAANGV) form a helical membrane-spanning segment. The Extracellular segment spans residues 177–189 (YTKQKMDPKELGK). Residues 190 to 210 (YGVLFYNACFMLIPTVIISVS) traverse the membrane as a helical segment. Over 211-225 (TGDFQQATEFRHWKN) the chain is Cytoplasmic. Residues 226–246 (VLFIIQFLLSCLLGFLLMYST) form a helical membrane-spanning segment. Over 247 to 253 (ALCSYYN) the chain is Extracellular. Residues 254–276 (SALTTAVVGAIKNVSVAYIGMLV) traverse the membrane as a helical segment. The Cytoplasmic segment spans residues 277 to 280 (GGDY). Residues 281–303 (IFSLLNFIGLNICMAGGLRYSFL) traverse the membrane as a helical segment. The Extracellular portion of the chain corresponds to 304–326 (TLSSQLKPKQPVDEESIPLDLKS).

This sequence belongs to the TPT transporter family. SLC35D subfamily.

Its subcellular location is the golgi apparatus membrane. The catalysed reaction is UMP(out) + UDP-N-acetyl-alpha-D-glucosamine(in) = UMP(in) + UDP-N-acetyl-alpha-D-glucosamine(out). It carries out the reaction UMP(out) + UDP-alpha-D-glucose(in) = UMP(in) + UDP-alpha-D-glucose(out). Its function is as follows. Nucleotide sugar antiporter transporting UDP-N-acetylglucosamine (UDP-GlcNAc) and UDP-glucose (UDP-Glc) from the cytosol into the lumen of the Golgi in exchange of UMP. By supplying UDP-N-acetylglucosamine, a donor substrate to heparan sulfate synthases, probably takes part in the synthesis of these glycoconjugates. The protein is Nucleotide sugar transporter SLC35D2 of Mus musculus (Mouse).